Here is a 1100-residue protein sequence, read N- to C-terminus: Beta-alanine-activating enzyme (1100 aa).

Residues 162 to 181 (HKVTDREDRVSAESRTPEKE) are disordered. ATP is bound by residues 197 to 205 (TSGTTGTPK), D427, R441, and K526. One can recognise a Carrier domain in the interval 552 to 632 (EELWGKLQYL…DVYNHIVQAV (81 aa)). S591 is modified (O-(pantetheine 4'-phosphoryl)serine). Residues 643 to 671 (SYTTKRKFSDADPEEASGKPARLESAWPS) form a disordered region. A Phosphoserine modification is found at S651.

This sequence belongs to the ATP-dependent AMP-binding enzyme family.

Covalently binds beta-alanine in an ATP-dependent manner to form a thioester bond with its phosphopantetheine group and transfers it to an as yet unknown acceptor via an amide bond. May be required for a post-translational protein modification or for post-transcriptional modification of an RNA. The sequence is that of Beta-alanine-activating enzyme (Aasdh) from Mus musculus (Mouse).